We begin with the raw amino-acid sequence, 1530 residues long: Coiled-coil domain-containing protein 141 (1530 aa).

One copy of the Spectrin repeat lies at 49–127 (NLLEIGSSQD…SMLERRRELL (79 aa)). Residue threonine 91 is modified to Phosphothreonine. Coiled-coil stretches lie at residues 220–251 (IDSL…VLQL), 758–785 (LKEK…YEEI), and 865–967 (AKSL…VNKK). Disordered regions lie at residues 1153–1240 (SEER…PASS), 1259–1285 (LGKA…DTFT), 1324–1356 (PREV…SNVT), and 1369–1403 (SPGL…SVVS). The span at 1334–1345 (PSSQAQEISLGT) shows a compositional bias: polar residues. The region spanning 1409-1497 (PHFSRLLSNV…GTLSSKAILH (89 aa)) is the Ig-like domain.

Interacts with DISC1. Interacts preferentially with phosphorylated forms of myosin regulatory light chain (MRLC). Interacts (via the N-terminal region) with HDAC6; inhibits the deacetylase activity of HDAC6. Interacts with KIBRA (via the C-terminal region); retains AMPAR in the cytosol after internalization. Post-translationally, ubiquitinated and degradated by the CDC20-APC/C pathway. During brain development, CDC20-APC/C complex degrades CCDC141 after centrosome translocation into the dilated area. CCDC141 is restabilized in the dilation until the centrosome enters the dilation, at which point it is once again immediately destabilized by CDC20-APC/C complex. The oscillatory regulation of CCDC141 protein is needed for proper cortical migration. Phosphorylation at Thr-91 by PLK1 affects CCDC141 degradation.

It localises to the cytoplasm. Its subcellular location is the cytoskeleton. The protein localises to the microtubule organizing center. The protein resides in the centrosome. Its function is as follows. Plays a critical role in cortical radial and GnRH neurons migration during brain development. Regulates cortical radial migration by negatively controlling the activity of histone deacetylase 6 (HDAC6) and promotes centrosome maturation. CAMDI is required for dilation formation of cortical neurons during radial migration. Plays a critical role in learning and memory performance through regulation of AMPA-selective glutamate receptors (AMPARs) cell surface expression in competition with KIBRA. The sequence is that of Coiled-coil domain-containing protein 141 from Rattus norvegicus (Rat).